A 325-amino-acid polypeptide reads, in one-letter code: Biotin synthase (325 aa).

One can recognise a Radical SAM core domain in the interval 43 to 262; sequence CSVETAQLLS…VAVARLLMPR (220 aa). [4Fe-4S] cluster-binding residues include Cys-58, Cys-62, and Cys-65. Residues Cys-102, Cys-133, Cys-193, and Arg-266 each coordinate [2Fe-2S] cluster.

This sequence belongs to the radical SAM superfamily. Biotin synthase family. Homodimer. Requires [4Fe-4S] cluster as cofactor. [2Fe-2S] cluster serves as cofactor.

The catalysed reaction is (4R,5S)-dethiobiotin + (sulfur carrier)-SH + 2 reduced [2Fe-2S]-[ferredoxin] + 2 S-adenosyl-L-methionine = (sulfur carrier)-H + biotin + 2 5'-deoxyadenosine + 2 L-methionine + 2 oxidized [2Fe-2S]-[ferredoxin]. The protein operates within cofactor biosynthesis; biotin biosynthesis; biotin from 7,8-diaminononanoate: step 2/2. Its function is as follows. Catalyzes the conversion of dethiobiotin (DTB) to biotin by the insertion of a sulfur atom into dethiobiotin via a radical-based mechanism. The polypeptide is Biotin synthase (Azorhizobium caulinodans (strain ATCC 43989 / DSM 5975 / JCM 20966 / LMG 6465 / NBRC 14845 / NCIMB 13405 / ORS 571)).